Reading from the N-terminus, the 194-residue chain is Large ribosomal subunit protein bL9 (194 aa).

Belongs to the bacterial ribosomal protein bL9 family.

Binds to the 23S rRNA. In Rhodopseudomonas palustris (strain BisA53), this protein is Large ribosomal subunit protein bL9.